A 587-amino-acid polypeptide reads, in one-letter code: Vesicular glutamate transporter 2.2 (587 aa).

The Cytoplasmic portion of the chain corresponds to 1–71 (MDTVKERVLA…CTCFGLPRRY (71 aa)). A helical transmembrane segment spans residues 72–92 (IIAIMSGLGFCISFGIRCNLG). Residues 93-125 (VAIVDMVNNSTIHKGGKIIIKGKAKFNWDPETV) lie on the Vesicular side of the membrane. N100 and N101 each carry an N-linked (GlcNAc...) asparagine glycan. The helical transmembrane segment at 126–146 (GMIHGSFFWGYTVTQIPGGYI) threads the bilayer. Over 147–149 (SSR) the chain is Cytoplasmic. Residues 150–170 (LAANRVFGAAILLTSTLNMFI) form a helical membrane-spanning segment. Residues 171–180 (PSAARVHYGC) lie on the Vesicular side of the membrane. A helical membrane pass occupies residues 181-203 (VMFVRILQGLVEGVTYPACHGIW). Residues 204 to 217 (SKWAPPLERSRLAT) lie on the Cytoplasmic side of the membrane. The chain crosses the membrane as a helical span at residues 218 to 238 (TSFCGSYAGAVVAMPLAGILV). Topologically, residues 239–245 (QYSGWSS) are vesicular. The helical transmembrane segment at 246–266 (VFYIYGSFGIVWYMFWILVSY) threads the bilayer. Over 267 to 311 (ESPADHPTITDEERTYIEESIGESAKLLGAMEKYKTPWRKFFTSM) the chain is Cytoplasmic. Residues 312–332 (PVYAIIVANFCRSWTFYLLLI) form a helical membrane-spanning segment. The Vesicular portion of the chain corresponds to 333 to 350 (SQPAYFEEVFGFEISKVG). A helical transmembrane segment spans residues 351–371 (MVSALPHLVMTIIVPIGGQLA). Topologically, residues 372 to 387 (DYLRSKNILTTTTVRK) are cytoplasmic. Residues 388-408 (IMNCGGFGMEATLLLVVGFSH) traverse the membrane as a helical segment. Topologically, residues 409-410 (SK) are vesicular. A helical membrane pass occupies residues 411 to 431 (GVAISFLVLAVGFSGFAISGF). At 432 to 444 (NVNHLDIAPRYAS) the chain is on the cytoplasmic side. Residues 445–465 (ILMGISNGVGTLSGMVCPLIV) form a helical membrane-spanning segment. Residues 466 to 479 (GAMTKNKTREEWQN) are Vesicular-facing. N471 carries an N-linked (GlcNAc...) asparagine glycan. Residues 480-500 (VFLIASLVHYGGVIFYGIFAS) form a helical membrane-spanning segment. Over 501–587 (GEKQPWADPE…ERTYTGDGYS (87 aa)) the chain is Cytoplasmic.

This sequence belongs to the major facilitator superfamily. Sodium/anion cotransporter family. VGLUT subfamily. In terms of tissue distribution, expressed in spinal cord.

It is found in the cytoplasmic vesicle. Its subcellular location is the secretory vesicle. The protein resides in the synaptic vesicle membrane. The protein localises to the membrane. It localises to the synapse. It is found in the synaptosome. Its subcellular location is the cell membrane. The enzyme catalyses L-glutamate(out) = L-glutamate(in). The catalysed reaction is 3 Na(+)(out) + phosphate(out) = 3 Na(+)(in) + phosphate(in). It carries out the reaction phosphate(in) = phosphate(out). It catalyses the reaction K(+)(in) + H(+)(out) = K(+)(out) + H(+)(in). The enzyme catalyses chloride(in) = chloride(out). Chloride channel activity is allosterically activated by lumenal H(+) and Cl(-) leading to synaptic vesicles acidification. The L-glutamate transport activity is allosterically activated by lumenal H(+) and Cl(-). The allosteric requirement for H(+) efficiently prevents non-vesicular efflux across the plasma membrane. The L-glutamate uniporter activity exhibits a biphasic dependence on chloride concentration. Its function is as follows. Multifunctional transporter that transports L-glutamate as well as multiple ions such as chloride, proton, potassium, sodium and phosphate. At the synaptic vesicle membrane, mainly functions as a uniporter which transports preferentially L-glutamate but also, phosphate from the cytoplasm into synaptic vesicles at presynaptic nerve terminals of excitatory neural cells. The L-glutamate or phosphate uniporter activity is electrogenic and is driven by the proton electrochemical gradient, mainly by the electrical gradient established by the vacuolar H(+)-ATPase across the synaptic vesicle membrane. In addition, functions as a chloride channel that allows a chloride permeation through the synaptic vesicle membrane therefore affects the proton electrochemical gradient and promotes synaptic vesicles acidification. Moreover, functions as a vesicular K(+)/H(+) antiport allowing to maintain the electrical gradient and to decrease chemical gradient and therefore sustain vesicular L-glutamate uptake. The vesicular H(+)/H(+) antiport activity is electroneutral. At the plasma membrane, following exocytosis, functions as a symporter of Na(+) and phosphate from the extracellular space to the cytoplasm allowing synaptic phosphate homeostasis regulation. The symporter activity is driven by an inside negative membrane potential and is electrogenic. Also involved in the regulation of retinal hyaloid vessel regression during postnatal development. May also play a role in the endocrine L-glutamatergic system of other tissues such as pineal gland and pancreas. This chain is Vesicular glutamate transporter 2.2 (slc17a6a), found in Danio rerio (Zebrafish).